The following is a 585-amino-acid chain: Arginine--tRNA ligase (585 aa).

The 'HIGH' region signature appears at 131–141 (ANPTGPMHVGH).

The protein belongs to the class-I aminoacyl-tRNA synthetase family. As to quaternary structure, monomer.

The protein resides in the cytoplasm. It carries out the reaction tRNA(Arg) + L-arginine + ATP = L-arginyl-tRNA(Arg) + AMP + diphosphate. The polypeptide is Arginine--tRNA ligase (Brucella canis (strain ATCC 23365 / NCTC 10854 / RM-666)).